The following is a 978-amino-acid chain: Tyrosine-protein kinase transforming protein fms (978 aa).

Over 1 to 543 (RMPSGPGHYG…IGAHTPLPDE (543 aa)) the chain is Extracellular. Ig-like C2-type domains lie at 55 to 134 (PVIQ…IHLY), 141 to 231 (PWKV…KVQK), 236 to 331 (PATL…RVVE), 333 to 431 (AYSN…LTLR), and 434 to 533 (PEVR…WPIS). A disulfide bridge links Cys-76 with Cys-118. N-linked (GlcNAc...) asparagine; by host glycans are attached at residues Asn-79, Asn-107, Asn-128, Asn-187, Asn-309, Asn-320, Asn-336, Asn-369, Asn-444, Asn-511, and Asn-524. Disulfide bonds link Cys-161–Cys-211 and Cys-258–Cys-312. Cys-451 and Cys-516 are disulfide-bonded. The chain crosses the membrane as a helical span at residues 544-568 (LLFTPVLLTCMSIMALLLLLLLLLL). Residues 569–978 (YKYKQKPKYQ…PWQRTPPVAR (410 aa)) are Cytoplasmic-facing. Positions 613–942 (LQFGKTLGTG…PTFQQICSLL (330 aa)) constitute a Protein kinase domain. ATP is bound by residues 619 to 627 (LGTGAFGKV) and Lys-647. Asp-810 functions as the Proton acceptor in the catalytic mechanism. Tyr-841 carries the phosphotyrosine; by autocatalysis modification. Residues 952–978 (VPNYTNLPSSSSSRLLRPWQRTPPVAR) are disordered. The segment covering 958–969 (LPSSSSSRLLRP) has biased composition (low complexity). At Thr-973 the chain carries Phosphothreonine.

The protein belongs to the protein kinase superfamily. Tyr protein kinase family. CSF-1/PDGF receptor subfamily.

It is found in the membrane. It catalyses the reaction L-tyrosyl-[protein] + ATP = O-phospho-L-tyrosyl-[protein] + ADP + H(+). Truncated version of the receptor for colony-stimulating factor 1 (CSF-1). The chain is Tyrosine-protein kinase transforming protein fms (V-FMS) from Felidae (cat family).